The following is a 436-amino-acid chain: Phosphomethylpyrimidine synthase (436 aa).

Substrate-binding positions include N69, M98, Y127, H163, 185–187, 226–229, and E265; these read SRG and DACR. H269 serves as a coordination point for Zn(2+). Residue Y292 coordinates substrate. H333 contacts Zn(2+). [4Fe-4S] cluster contacts are provided by C409, C412, and C416.

This sequence belongs to the ThiC family. Requires [4Fe-4S] cluster as cofactor.

It carries out the reaction 5-amino-1-(5-phospho-beta-D-ribosyl)imidazole + S-adenosyl-L-methionine = 4-amino-2-methyl-5-(phosphooxymethyl)pyrimidine + CO + 5'-deoxyadenosine + formate + L-methionine + 3 H(+). It participates in cofactor biosynthesis; thiamine diphosphate biosynthesis. Functionally, catalyzes the synthesis of the hydroxymethylpyrimidine phosphate (HMP-P) moiety of thiamine from aminoimidazole ribotide (AIR) in a radical S-adenosyl-L-methionine (SAM)-dependent reaction. The polypeptide is Phosphomethylpyrimidine synthase (Clostridium acetobutylicum (strain ATCC 824 / DSM 792 / JCM 1419 / IAM 19013 / LMG 5710 / NBRC 13948 / NRRL B-527 / VKM B-1787 / 2291 / W)).